The following is a 232-amino-acid chain: MHSLSERVEQLRLNDCPDWLYLLHEFDALYRQGSDGGSRPIRTHRKRVRDSLALIVEANPAVNDRPPEVKPVTAHLGRALDLGERGAVQGMSRALARVAGRLTWEYGYEKVPKALARKYAYCEILGPRGPICAERLILGFVLFAPSTTYPQHSHKDIEESYISVAGAWSENDAAVHAPGSLILNRPGLEHRITTGDLSPCLLAYAWTGSEERLNQPGMKLSSPRKARIEKGI.

Positions 154, 159, 161, and 190 each coordinate a divalent metal cation.

This sequence belongs to the non-heme iron-dependent dioxygenase family. Homodimer. A divalent metal cation serves as cofactor.

The enzyme catalyses S,S-dimethyl-beta-propiothetin = acrylate + dimethyl sulfide + H(+). May cleave dimethylsulfoniopropionate (DMSP), releasing dimethyl sulfide (DMS). DMS is the principal form by which sulfur is transported from oceans to the atmosphere. The real activity of the protein is however subject to debate and it is unclear whether it constitutes a real dimethylsulfoniopropionate lyase in vivo. The polypeptide is Putative dimethylsulfoniopropionate lyase DddL (dddL) (Cereibacter sphaeroides (strain ATCC 17023 / DSM 158 / JCM 6121 / CCUG 31486 / LMG 2827 / NBRC 12203 / NCIMB 8253 / ATH 2.4.1.) (Rhodobacter sphaeroides)).